Reading from the N-terminus, the 677-residue chain is Methionine--tRNA ligase (677 aa).

Residues 15–25 (PYANGSIHLGH) carry the 'HIGH' region motif. Residues Cys-146, Cys-149, Cys-159, and Cys-162 each contribute to the Zn(2+) site. A 'KMSKS' region motif is present at residues 333 to 337 (KMSKS). Lys-336 lines the ATP pocket. In terms of domain architecture, tRNA-binding spans 575-677 (DFAKVDLRVA…AGAKPGHQVK (103 aa)).

This sequence belongs to the class-I aminoacyl-tRNA synthetase family. MetG type 1 subfamily. In terms of assembly, homodimer. Zn(2+) serves as cofactor.

The protein resides in the cytoplasm. The enzyme catalyses tRNA(Met) + L-methionine + ATP = L-methionyl-tRNA(Met) + AMP + diphosphate. Its function is as follows. Is required not only for elongation of protein synthesis but also for the initiation of all mRNA translation through initiator tRNA(fMet) aminoacylation. The chain is Methionine--tRNA ligase from Shigella flexneri serotype 5b (strain 8401).